The sequence spans 201 residues: Recombination protein RecR (201 aa).

The segment at 57–72 adopts a C4-type zinc-finger fold; it reads CKYCSNFGNKDECDIC. The Toprim domain occupies 80 to 176; it reads TKLMIVTTNE…QIYRIGFGIP (97 aa).

The protein belongs to the RecR family.

Functionally, may play a role in DNA repair. It seems to be involved in an RecBC-independent recombinational process of DNA repair. It may act with RecF and RecO. This chain is Recombination protein RecR, found in Ureaplasma urealyticum serovar 10 (strain ATCC 33699 / Western).